Here is a 628-residue protein sequence, read N- to C-terminus: uncharacterized protein (628 aa).

2 disordered regions span residues 1 to 65 and 80 to 125; these read MDTN…ISSA and SLRN…VSLS. Over residues 12–21 the composition is skewed to low complexity; that stretch reads ISPSIASSFP. Polar residues predominate over residues 25–37; it reads PFSSQNSTTSNPE. Composition is skewed to low complexity over residues 48–64 and 87–102; these read SSII…NISS and SPHI…SSSS. The segment covering 103-116 has biased composition (basic and acidic residues); the sequence is DLDKSMLDEKHPDS. Transmembrane regions (helical) follow at residues 157 to 177, 203 to 223, 230 to 250, 259 to 279, 294 to 314, 324 to 344, 417 to 437, 454 to 474, 483 to 503, 511 to 531, 542 to 562, and 583 to 603; these read IITC…SISL, VGTG…NLLM, LWLS…AVLG, FIAL…GFAF, IGWY…LSAA, LYGY…QGLF, LWPP…LVNY, VSLL…TVLP, MLFF…TTFV, VGLL…MTWV, VGVA…SVVA, and MCGM…VQKF.

The protein belongs to the major facilitator superfamily. Allantoate permease family.

The protein localises to the membrane. This is an uncharacterized protein from Schizosaccharomyces pombe (strain 972 / ATCC 24843) (Fission yeast).